The primary structure comprises 200 residues: Putative AgrB-like protein (200 aa).

5 consecutive transmembrane segments (helical) span residues 49-69 (LIIT…LVFM), 88-108 (LLCT…IQFT), 114-134 (LFRF…SPAV), 148-168 (ALKH…FLVS), and 171-191 (LGTI…PLKG).

Belongs to the AgrB family.

It localises to the cell membrane. Its function is as follows. May be involved in the proteolytic processing of a quorum sensing system signal molecule precursor. This Lactiplantibacillus plantarum (strain ATCC BAA-793 / NCIMB 8826 / WCFS1) (Lactobacillus plantarum) protein is Putative AgrB-like protein.